The sequence spans 237 residues: Concanavalin-A (237 aa).

E8 and D10 together coordinate Mn(2+). Ca(2+) is bound by residues D10, Y12, N14, and D19. Residue Y12 participates in a carbohydrate binding. Residues D19 and H24 each coordinate Mn(2+). 99-100 is an a carbohydrate binding site; the sequence is LY. A Ca(2+)-binding site is contributed by D208. An a carbohydrate-binding site is contributed by R228.

It belongs to the leguminous lectin family. Homotetramer.

Glucose/D-mannose specific lectin. The protein is Concanavalin-A of Canavalia lineata (Beach bean).